The sequence spans 329 residues: MENMLTFACQQQRRNVRWLSSLSVLMLLAVVLSLCAGDQWIAPGDWFSARGELFVWQIRLPRTLAVLLVGAALALSGAVMQALFENPLAEPGLLGVSNGAGVGLIAAVLLGQGQLPGWALGFCAIAGALIITLILLRFARRHLSTSRLLLAGVALGIICSAMMTWAIYFSTSFDLRQLMYWMMGGFGGVDWQQAWLMIALIPVSLWICCQSQPMNILALGETSARQLGLPLWFWRNLLVVATGWMVGVSVALAGSIGFIGLVIPHILRLCGLSDHRALLPGCALAGAIALLLADVIARLALASAELPIGVVTATMGAPVFIWLLLKSRR.

9 helical membrane passes run 22–42 (LSVL…QWIA), 64–84 (LAVL…QALF), 91–111 (PGLL…VLLG), 115–135 (LPGW…TLIL), 149–169 (LLAG…AIYF), 187–207 (GGVD…SLWI), 243–263 (GWMV…GLVI), 277–297 (ALLP…DVIA), and 305–325 (ELPI…WLLL).

The protein belongs to the binding-protein-dependent transport system permease family. FecCD subfamily. In terms of assembly, the complex is composed of two ATP-binding proteins (BtuD), two transmembrane proteins (BtuC) and a solute-binding protein (BtuF).

Its subcellular location is the cell inner membrane. Part of the ABC transporter complex BtuCDF involved in vitamin B12 import. Involved in the translocation of the substrate across the membrane. The chain is Vitamin B12 import system permease protein BtuC from Citrobacter koseri (strain ATCC BAA-895 / CDC 4225-83 / SGSC4696).